A 343-amino-acid chain; its full sequence is Fructose-1,6-bisphosphatase class 1 (343 aa).

Mg(2+) contacts are provided by E91, D113, I115, and D116. Residues 116–119, N210, and K276 each bind substrate; that span reads DGSS. Residue E282 coordinates Mg(2+).

Belongs to the FBPase class 1 family. In terms of assembly, homotetramer. Mg(2+) serves as cofactor.

Its subcellular location is the cytoplasm. The catalysed reaction is beta-D-fructose 1,6-bisphosphate + H2O = beta-D-fructose 6-phosphate + phosphate. It participates in carbohydrate biosynthesis; gluconeogenesis. The chain is Fructose-1,6-bisphosphatase class 1 from Parvibaculum lavamentivorans (strain DS-1 / DSM 13023 / NCIMB 13966).